We begin with the raw amino-acid sequence, 314 residues long: Hydroxyacyl-coenzyme A dehydrogenase, mitochondrial (314 aa).

The N-terminal 12 residues, 1–12 (MAFVTRQFVRSM), are a transit peptide targeting the mitochondrion. NAD(+) is bound by residues 34–39 (GGGLMG) and Asp57. Ser73 contributes to the CoA binding site. An N6-acetyllysine modification is found at Lys75. Lys80 is a binding site for CoA. Lys80 carries the post-translational modification N6-succinyllysine. Residues Lys81 and Lys87 each carry the N6-acetyllysine; alternate modification. N6-succinyllysine; alternate occurs at positions 81 and 87. Residue Glu122 coordinates NAD(+). N6-acetyllysine is present on Lys125. Lys127 provides a ligand contact to NAD(+). Lys127 carries the N6-(2-hydroxyisobutyryl)lysine modification. Lys136 is subject to N6-acetyllysine; alternate. Lys136 carries the N6-succinyllysine; alternate modification. The NAD(+) site is built by Ser149 and Asn173. Ser149 contributes to the CoA binding site. At Lys179 the chain carries N6-acetyllysine. Residues Lys185, Lys192, and Lys202 each carry the N6-acetyllysine; alternate modification. Residues Lys185, Lys192, and Lys202 each carry the N6-succinyllysine; alternate modification. The residue at position 206 (Lys206) is an N6-succinyllysine. An N6-acetyllysine; alternate mark is found at Lys212 and Lys241. 2 positions are modified to N6-succinyllysine; alternate: Lys212 and Lys241. Lys305 contributes to the NAD(+) binding site. Lys312 carries the N6-acetyllysine; alternate modification. At Lys312 the chain carries N6-succinyllysine; alternate.

This sequence belongs to the 3-hydroxyacyl-CoA dehydrogenase family. In terms of assembly, homodimer. Interacts with GLUD1; this interaction inhibits the activation of glutamate dehydrogenase 1 (GLUD1). In terms of processing, succinylation at Lys-81, adjacent to a coenzyme A binding site. Desuccinylated by SIRT5.

The protein resides in the mitochondrion matrix. It catalyses the reaction a (3S)-3-hydroxyacyl-CoA + NAD(+) = a 3-oxoacyl-CoA + NADH + H(+). The catalysed reaction is (3S)-3-hydroxybutanoyl-CoA + NAD(+) = acetoacetyl-CoA + NADH + H(+). It carries out the reaction (3S)-hydroxydecanoyl-CoA + NAD(+) = 3-oxodecanoyl-CoA + NADH + H(+). The enzyme catalyses (3S)-hydroxyhexadecanoyl-CoA + NAD(+) = 3-oxohexadecanoyl-CoA + NADH + H(+). It functions in the pathway lipid metabolism; fatty acid beta-oxidation. Its function is as follows. Mitochondrial fatty acid beta-oxidation enzyme that catalyzes the third step of the beta-oxidation cycle for medium and short-chain 3-hydroxy fatty acyl-CoAs (C4 to C10). Plays a role in the control of insulin secretion by inhibiting the activation of glutamate dehydrogenase 1 (GLUD1), an enzyme that has an important role in regulating amino acid-induced insulin secretion. Plays a role in the maintenance of normal spermatogenesis through the reduction of fatty acid accumulation in the testes. The protein is Hydroxyacyl-coenzyme A dehydrogenase, mitochondrial (Hadh) of Rattus norvegicus (Rat).